Here is a 316-residue protein sequence, read N- to C-terminus: Thymidylate synthase (316 aa).

DUMP is bound by residues Arg23 and 178-179 (RR). Catalysis depends on Cys198, which acts as the Nucleophile. Residues 218 to 221 (RSAD), Asn229, and 259 to 261 (HLY) contribute to the dUMP site. Asp221 contributes to the (6R)-5,10-methylene-5,6,7,8-tetrahydrofolate binding site. Ala315 contributes to the (6R)-5,10-methylene-5,6,7,8-tetrahydrofolate binding site.

It belongs to the thymidylate synthase family. Bacterial-type ThyA subfamily. As to quaternary structure, homodimer.

It localises to the cytoplasm. It carries out the reaction dUMP + (6R)-5,10-methylene-5,6,7,8-tetrahydrofolate = 7,8-dihydrofolate + dTMP. The protein operates within pyrimidine metabolism; dTTP biosynthesis. Its function is as follows. Catalyzes the reductive methylation of 2'-deoxyuridine-5'-monophosphate (dUMP) to 2'-deoxythymidine-5'-monophosphate (dTMP) while utilizing 5,10-methylenetetrahydrofolate (mTHF) as the methyl donor and reductant in the reaction, yielding dihydrofolate (DHF) as a by-product. This enzymatic reaction provides an intracellular de novo source of dTMP, an essential precursor for DNA biosynthesis. The sequence is that of Thymidylate synthase from Lacticaseibacillus casei (Lactobacillus casei).